A 582-amino-acid chain; its full sequence is ATP-dependent lipid A-core flippase (582 aa).

The next 5 membrane-spanning stretches (helical) occupy residues 16-36, 63-83, 153-173, 253-273, and 275-295; these read LWPTIAPFKAGLIVAGVALIL, VLVWMPLVVIGLMILRGITSY, IIGLFIMMFYYSWQLSIILIV, PIIQLIASLALAFVLYAASFP, and VMDNLTAGTITVVFSSMIALM. One can recognise an ABC transmembrane type-1 domain in the interval 28 to 310; that stretch reads IVAGVALILN…LTNVNAQFQR (283 aa). Residues 342 to 578 form the ABC transporter domain; the sequence is VEFRNVTFTY…RGVYAQLHKM (237 aa). 376–383 contacts ATP; it reads GRSGSGKS.

Belongs to the ABC transporter superfamily. Lipid exporter (TC 3.A.1.106) family. As to quaternary structure, homodimer.

It localises to the cell inner membrane. The catalysed reaction is ATP + H2O + lipid A-core oligosaccharideSide 1 = ADP + phosphate + lipid A-core oligosaccharideSide 2.. Its function is as follows. Involved in lipopolysaccharide (LPS) biosynthesis. Translocates lipid A-core from the inner to the outer leaflet of the inner membrane. Transmembrane domains (TMD) form a pore in the inner membrane and the ATP-binding domain (NBD) is responsible for energy generation. This Shigella flexneri protein is ATP-dependent lipid A-core flippase.